The primary structure comprises 33 residues: Alpha-amanitin proprotein (33 aa).

Positions methionine 1 to proline 10 are excised as a propeptide. The residue at position 11 (isoleucine 11) is a (3R,4R)-4,5-dihydroxyisoleucine; in form alpha-amanitin. Isoleucine 11 carries the post-translational modification (3R,4S)-4-hydroxyisoleucine; in form gamma-amanitin. Positions isoleucine 11–proline 18 form a cross-link, cyclopeptide (Ile-Pro). Positions tryptophan 12–cysteine 16 form a cross-link, 2'-cysteinyl-6'-hydroxytryptophan sulfoxide (Trp-Cys). Proline 18 carries the 4-hydroxyproline modification. Residues cysteine 19–alanine 33 constitute a propeptide that is removed on maturation.

It belongs to the MSDIN fungal toxin family. Post-translationally, processed by the macrocyclase-peptidase enzyme POPB to yield a toxic cyclic decapeptide. POPB first removes 10 residues from the N-terminus. Conformational trapping of the remaining peptide forces the enzyme to release this intermediate rather than proceed to macrocyclization. The enzyme rebinds the remaining peptide in a different conformation and catalyzes macrocyclization of the N-terminal 8 residues.

In terms of biological role, major toxin belonging to the bicyclic octapeptides amatoxins that acts by binding non-competitively to RNA polymerase II and greatly slowing the elongation of transcripts from target promoters. The sequence is that of Alpha-amanitin proprotein from Amanita pallidorosea.